Reading from the N-terminus, the 270-residue chain is Elongation factor Ts (270 aa).

The tract at residues 76 to 79 is involved in Mg(2+) ion dislocation from EF-Tu; it reads TDFV.

Belongs to the EF-Ts family.

It is found in the cytoplasm. Associates with the EF-Tu.GDP complex and induces the exchange of GDP to GTP. It remains bound to the aminoacyl-tRNA.EF-Tu.GTP complex up to the GTP hydrolysis stage on the ribosome. This chain is Elongation factor Ts, found in Corynebacterium aurimucosum (strain ATCC 700975 / DSM 44827 / CIP 107346 / CN-1) (Corynebacterium nigricans).